The sequence spans 970 residues: Unconventional myosin-XIX (970 aa).

In terms of domain architecture, Myosin motor spans 35–758 (YKLDDLTRVN…MLELLECGRA (724 aa)). 132–139 (GESGAGKT) serves as a coordination point for ATP. The actin-binding stretch occupies residues 602–624 (LEQLLQVLHSTTPHYIRCIKPNS). S685 is subject to Phosphoserine. IQ domains are found at residues 759-779 (RVLE…RHRE) and 783-812 (QWRA…AATV). The tract at residues 824–970 (MACLAAKELD…VTSSAFTGLG (147 aa)) is myMOMA region.

Belongs to the TRAFAC class myosin-kinesin ATPase superfamily. Myosin family. As to quaternary structure, myosin is a hexamer of 2 heavy chains and 4 light chains: interacts with myosin light chains MYL9 and MYL12B. In terms of tissue distribution, widely expressed in multiple tissues and cell lines.

It localises to the mitochondrion outer membrane. Its subcellular location is the cytoplasm. The protein localises to the cytoskeleton. Its function is as follows. Actin-based motor molecule with ATPase activity that localizes to the mitochondrion outer membrane. Motor protein that moves towards the plus-end of actin filaments. Required for mitochondrial inheritance during mitosis. May be involved in mitochondrial transport or positioning. This is Unconventional myosin-XIX from Homo sapiens (Human).